The following is a 558-amino-acid chain: Formate--tetrahydrofolate ligase (558 aa).

67–74 (TPAGEGKT) serves as a coordination point for ATP.

It belongs to the formate--tetrahydrofolate ligase family.

It catalyses the reaction (6S)-5,6,7,8-tetrahydrofolate + formate + ATP = (6R)-10-formyltetrahydrofolate + ADP + phosphate. The protein operates within one-carbon metabolism; tetrahydrofolate interconversion. This Roseobacter denitrificans (strain ATCC 33942 / OCh 114) (Erythrobacter sp. (strain OCh 114)) protein is Formate--tetrahydrofolate ligase.